The chain runs to 214 residues: Large ribosomal subunit protein bL25 (214 aa).

Positions 179–214 (VPPTQGPSEAEIEEVEAGDADTPEPEVVGEKEEDEE) are disordered. Positions 188–202 (AEIEEVEAGDADTPE) are enriched in acidic residues.

This sequence belongs to the bacterial ribosomal protein bL25 family. CTC subfamily. Part of the 50S ribosomal subunit; part of the 5S rRNA/L5/L18/L25 subcomplex. Contacts the 5S rRNA. Binds to the 5S rRNA independently of L5 and L18.

This is one of the proteins that binds to the 5S RNA in the ribosome where it forms part of the central protuberance. In Staphylococcus carnosus (strain TM300), this protein is Large ribosomal subunit protein bL25.